Reading from the N-terminus, the 996-residue chain is RNA2 polyprotein (996 aa).

An involved in tubule formation by the movement protein region spans residues 363–369 (LRYTIGG). The tract at residues 368–398 (GGSKPKNKLADKAHNEEAETSDSKGIIDPKD) is disordered. The span at 375-398 (KLADKAHNEEAETSDSKGIIDPKD) shows a compositional bias: basic and acidic residues.

As to quaternary structure, interacts with the large capsid protein. In terms of assembly, interacts with the small capsid protein. Homomultimer; assembles as pentons. Interacts with the movement protein (via C-terminus). Interacts (via C-terminus) with the large capsid protein. In terms of processing, specific enzymatic cleavages by picornain 3C-like protease in vivo yield mature proteins.

Its subcellular location is the host cell junction. It localises to the host plasmodesma. It is found in the virion. Its function is as follows. Responsible for viral RNA2 accumulation. May function by recruiting the RNA1-encoded polyprotein that contains the replication protein to RNA2 and enable its replication. Transports the viral genome to neighboring plant cells directly through plasmosdesmata, without any budding. The movement protein allows efficient cell to cell propagation, by bypassing the host cell wall barrier. Acts by forming a tubular structure at the host plasmodesmata, enlarging it enough to allow free passage of virion capsids. Binds to GTP and to single-stranded RNA and single-stranded DNA in a non-sequence-specific manner. In terms of biological role, together with the mature small capsid protein, forms an icosahedral capsid (T=3) enclosing the viral positive strand RNA genome, with a diameter of approximately 300 Angstroms. The capsid is formed from 60 copies each of the large and the mature small capsid protein. The large capsid protein interacts with the viral RNA. Functionally, together with the large capsid protein, forms an icosahedral capsid (T=3) enclosing the viral positive strand RNA genome, with a diameter of approximately 300 Angstroms. The capsid is formed from 60 copies each of the large and the mature small capsid protein. The mature small capsid protein forms the turrets at the fivefold axes of the viral particle. The chain is RNA2 polyprotein from Red clover mottle virus (RCMV).